Consider the following 435-residue polypeptide: Methylenetetrahydrofolate--tRNA-(uracil-5-)-methyltransferase TrmFO (435 aa).

7–12 is a binding site for FAD; sequence GAGLAG.

It belongs to the MnmG family. TrmFO subfamily. FAD is required as a cofactor.

The protein resides in the cytoplasm. It carries out the reaction uridine(54) in tRNA + (6R)-5,10-methylene-5,6,7,8-tetrahydrofolate + NADH + H(+) = 5-methyluridine(54) in tRNA + (6S)-5,6,7,8-tetrahydrofolate + NAD(+). The catalysed reaction is uridine(54) in tRNA + (6R)-5,10-methylene-5,6,7,8-tetrahydrofolate + NADPH + H(+) = 5-methyluridine(54) in tRNA + (6S)-5,6,7,8-tetrahydrofolate + NADP(+). Catalyzes the folate-dependent formation of 5-methyl-uridine at position 54 (M-5-U54) in all tRNAs. The chain is Methylenetetrahydrofolate--tRNA-(uracil-5-)-methyltransferase TrmFO from Thermotoga maritima (strain ATCC 43589 / DSM 3109 / JCM 10099 / NBRC 100826 / MSB8).